A 174-amino-acid polypeptide reads, in one-letter code: UPF0316 protein LMOf2365_1801 (174 aa).

3 consecutive transmembrane segments (helical) span residues 4–24 (GIFIVATIFIVNILYVTIYTV), 36–56 (LAALSSVFEMIIYVVALSLVL), and 62–82 (IANVLAYAIGFGVGIIVGMKI).

This sequence belongs to the UPF0316 family.

Its subcellular location is the cell membrane. The polypeptide is UPF0316 protein LMOf2365_1801 (Listeria monocytogenes serotype 4b (strain F2365)).